We begin with the raw amino-acid sequence, 430 residues long: Histidine--tRNA ligase (430 aa).

This sequence belongs to the class-II aminoacyl-tRNA synthetase family. In terms of assembly, homodimer.

It is found in the cytoplasm. The enzyme catalyses tRNA(His) + L-histidine + ATP = L-histidyl-tRNA(His) + AMP + diphosphate + H(+). This Lactococcus lactis subsp. cremoris (strain SK11) protein is Histidine--tRNA ligase.